A 597-amino-acid chain; its full sequence is Elongation factor 4 (597 aa).

The 183-residue stretch at 2–184 folds into the tr-type G domain; the sequence is KNIRNFSIIA…EIVAKIPAPT (183 aa). GTP-binding positions include 14 to 19 and 131 to 134; these read DHGKST and NKID.

This sequence belongs to the TRAFAC class translation factor GTPase superfamily. Classic translation factor GTPase family. LepA subfamily.

Its subcellular location is the cell inner membrane. It carries out the reaction GTP + H2O = GDP + phosphate + H(+). Functionally, required for accurate and efficient protein synthesis under certain stress conditions. May act as a fidelity factor of the translation reaction, by catalyzing a one-codon backward translocation of tRNAs on improperly translocated ribosomes. Back-translocation proceeds from a post-translocation (POST) complex to a pre-translocation (PRE) complex, thus giving elongation factor G a second chance to translocate the tRNAs correctly. Binds to ribosomes in a GTP-dependent manner. The polypeptide is Elongation factor 4 (Neisseria meningitidis serogroup B (strain ATCC BAA-335 / MC58)).